Reading from the N-terminus, the 239-residue chain is tRNA (guanine-N(7)-)-methyltransferase (239 aa).

Residues glutamate 69, glutamate 94, aspartate 121, and aspartate 144 each contribute to the S-adenosyl-L-methionine site. Aspartate 144 is a catalytic residue. Substrate-binding positions include lysine 148, aspartate 180, and threonine 217 to glutamate 220.

It belongs to the class I-like SAM-binding methyltransferase superfamily. TrmB family.

It carries out the reaction guanosine(46) in tRNA + S-adenosyl-L-methionine = N(7)-methylguanosine(46) in tRNA + S-adenosyl-L-homocysteine. It functions in the pathway tRNA modification; N(7)-methylguanine-tRNA biosynthesis. In terms of biological role, catalyzes the formation of N(7)-methylguanine at position 46 (m7G46) in tRNA. This Alcanivorax borkumensis (strain ATCC 700651 / DSM 11573 / NCIMB 13689 / SK2) protein is tRNA (guanine-N(7)-)-methyltransferase.